Reading from the N-terminus, the 305-residue chain is tRNA dimethylallyltransferase (305 aa).

11-18 (GPTAVGKT) serves as a coordination point for ATP. 13-18 (TAVGKT) is a binding site for substrate. Residues 36–39 (DSMQ) form an interaction with substrate tRNA region.

The protein belongs to the IPP transferase family. Monomer. The cofactor is Mg(2+).

The enzyme catalyses adenosine(37) in tRNA + dimethylallyl diphosphate = N(6)-dimethylallyladenosine(37) in tRNA + diphosphate. Functionally, catalyzes the transfer of a dimethylallyl group onto the adenine at position 37 in tRNAs that read codons beginning with uridine, leading to the formation of N6-(dimethylallyl)adenosine (i(6)A). This chain is tRNA dimethylallyltransferase, found in Listeria monocytogenes serotype 4a (strain HCC23).